We begin with the raw amino-acid sequence, 624 residues long: Histone-lysine N-methyltransferase, H3 lysine-9 specific SUVH4 (624 aa).

Disordered stretches follow at residues 1-25 (MAGK…VQKV) and 54-86 (DDTE…KGKQ). A YDG domain is found at 149–302 (GDLPGIDVGH…FTVYKYRLKR (154 aa)). Residues 381–443 (TGCNCRGSCT…KCVNRTSQKR (63 aa)) enclose the Pre-SET domain. 9 residues coordinate Zn(2+): cysteine 383, cysteine 385, cysteine 389, cysteine 395, cysteine 397, cysteine 425, cysteine 429, cysteine 431, and cysteine 435. An SET domain is found at 446 to 594 (FNLEVFRSAK…PMQELTYDYG (149 aa)). S-adenosyl-L-methionine is bound by residues 456–458 (KGW), tyrosine 493, arginine 548, and 551–552 (NH). Zn(2+) contacts are provided by cysteine 554, cysteine 612, cysteine 614, and cysteine 619. Residues 608-624 (KQLACYCGALNCRKRLY) enclose the Post-SET domain.

The protein belongs to the class V-like SAM-binding methyltransferase superfamily. Histone-lysine methyltransferase family. Suvar3-9 subfamily. In terms of assembly, interacts with H3 histone. Expressed in leaves stems and flowers.

The protein localises to the nucleus. The protein resides in the chromosome. It is found in the centromere. The catalysed reaction is N(6)-methyl-L-lysyl(9)-[histone H3] + S-adenosyl-L-methionine = N(6),N(6)-dimethyl-L-lysyl(9)-[histone H3] + S-adenosyl-L-homocysteine + H(+). The enzyme catalyses L-lysyl(9)-[histone H3] + S-adenosyl-L-methionine = N(6)-methyl-L-lysyl(9)-[histone H3] + S-adenosyl-L-homocysteine + H(+). Histone methyltransferase. Methylates 'Lys-9' of histone H3. H3 'Lys-9' methylation represents a specific tag for epigenetic transcriptional repression. The silencing mechanism via DNA CpNpG methylation requires the targeting of chromomethylase CMT3 to methylated histones, probably through an interaction with an HP1-like adapter. By its function, KYP is directly required for the maintenance of the DNA CpNpG and asymmetric methylation. Involved in the silencing of transposable elements. In Arabidopsis thaliana (Mouse-ear cress), this protein is Histone-lysine N-methyltransferase, H3 lysine-9 specific SUVH4 (SUVH4).